The primary structure comprises 2059 residues: DNA polymerase theta (2059 aa).

Positions 25–45 are disordered; the sequence is DKENAQPGNGNIQVQSAGNEV. A compositionally biased stretch (polar residues) spans 30–45; sequence QPGNGNIQVQSAGNEV. The region spanning 243 to 416 is the Helicase ATP-binding domain; the sequence is PRLLFEHCNL…WLDAELYITN (174 aa). 256-263 contacts ATP; that stretch reads APTSAGKT. A DEAH box motif is present at residues 357–360; sequence DEVH. The region spanning 464-666 is the Helicase C-terminal domain; that stretch reads CIETLLEGCS…HLKRALLEVI (203 aa). 4 disordered regions span residues 1052–1073, 1168–1190, 1204–1274, and 1330–1372; these read PPVK…KNPR, PQLA…VNEG, QRTQ…SRKV, and PHAS…GVSS. Polar residues predominate over residues 1062–1071; the sequence is ENGTANSQKN. Residues 1213 to 1274 show a composition bias toward polar residues; sequence KDQPIQASRS…NANRTASRKV (62 aa). Residues 1355 to 1365 show a composition bias toward basic and acidic residues; sequence REIEIDLESKN.

This sequence belongs to the DNA polymerase type-A family. It depends on Mg(2+) as a cofactor. In terms of processing, in adult males, cleaved to produce a 100 kDa form. In terms of tissue distribution, expressed in ovaries (at protein level).

The protein localises to the nucleus. The catalysed reaction is DNA(n) + a 2'-deoxyribonucleoside 5'-triphosphate = DNA(n+1) + diphosphate. With respect to regulation, resistant to aphidicolin, but sensitive to dideoxythymindine triphosphate (ddTTP) and N-ethyl malemide (NEM). In terms of biological role, multifunctional protein with both DNA polymerase and ATPase activities. Might have 3' to 5' exonuclease activity. Plays a role in different DNA repair pathways such as DNA strand cross-link repair and microhomology-mediated end-joining (MMEJ), an alternative non-homologous end-joining (NHEJ) machinery triggered in response to double-strand breaks. MMEJ is an error-prone repair pathway that produces deletions of sequences from the strand being repaired and promotes genomic rearrangements, such as telomere fusions. Utilizes short microhomologies present in partially and fully single-stranded DNA (ssDNA) as primers for DNA synthesis. Prefers poly(dA)/oligo(dT) as a template-primer. The ATPase activity is necessary during interstrand cross-link (ICL) repair and has a critical role in generating templated insertions during MMEJ. Necessary for processing DNA damage induced by oxygen and N-ethylation. In follicle cells, contributes to double-strand break repair at physiological rereplication forks necessary for survival of fertilized eggs. The chain is DNA polymerase theta from Drosophila melanogaster (Fruit fly).